Consider the following 317-residue polypeptide: L-lactate dehydrogenase (317 aa).

NAD(+) contacts are provided by Val16, Asp37, and Tyr69. Substrate contacts are provided by residues Gln86, Arg92, and 124–127 (NPVD). NAD(+)-binding positions include 122–124 (ASN) and Ser147. 152–155 (DSAR) provides a ligand contact to substrate. The Proton acceptor role is filled by His179. Residue Tyr223 is modified to Phosphotyrosine. Position 232 (Thr232) interacts with substrate.

The protein belongs to the LDH/MDH superfamily. LDH family. As to quaternary structure, homotetramer.

The protein resides in the cytoplasm. It catalyses the reaction (S)-lactate + NAD(+) = pyruvate + NADH + H(+). Its pathway is fermentation; pyruvate fermentation to lactate; (S)-lactate from pyruvate: step 1/1. Its function is as follows. Catalyzes the conversion of lactate to pyruvate. The chain is L-lactate dehydrogenase from Mycoplasma capricolum subsp. capricolum (strain California kid / ATCC 27343 / NCTC 10154).